A 377-amino-acid polypeptide reads, in one-letter code: Nitric oxide reductase FlRd-NAD(+) reductase (377 aa).

It belongs to the FAD-dependent oxidoreductase family. Requires FAD as cofactor.

It is found in the cytoplasm. The enzyme catalyses 2 reduced [nitric oxide reductase rubredoxin domain] + NAD(+) + H(+) = 2 oxidized [nitric oxide reductase rubredoxin domain] + NADH. The protein operates within nitrogen metabolism; nitric oxide reduction. In terms of biological role, one of at least two accessory proteins for anaerobic nitric oxide (NO) reductase. Reduces the rubredoxin moiety of NO reductase. In Salmonella agona (strain SL483), this protein is Nitric oxide reductase FlRd-NAD(+) reductase.